Here is a 367-residue protein sequence, read N- to C-terminus: tRNA-specific 2-thiouridylase MnmA (367 aa).

ATP-binding positions include 9–16 (GLSGGVDS) and M35. Residues 95-97 (NPD) form an interaction with target base in tRNA region. The active-site Nucleophile is C100. C100 and C196 are disulfide-bonded. G124 is a binding site for ATP. Residues 146-148 (KDQ) are interaction with tRNA. C196 (cysteine persulfide intermediate) is an active-site residue. An interaction with tRNA region spans residues 308–309 (RY).

This sequence belongs to the MnmA/TRMU family.

Its subcellular location is the cytoplasm. It carries out the reaction S-sulfanyl-L-cysteinyl-[protein] + uridine(34) in tRNA + AH2 + ATP = 2-thiouridine(34) in tRNA + L-cysteinyl-[protein] + A + AMP + diphosphate + H(+). Functionally, catalyzes the 2-thiolation of uridine at the wobble position (U34) of tRNA, leading to the formation of s(2)U34. This Nitrosococcus oceani (strain ATCC 19707 / BCRC 17464 / JCM 30415 / NCIMB 11848 / C-107) protein is tRNA-specific 2-thiouridylase MnmA.